We begin with the raw amino-acid sequence, 115 residues long: Large ribosomal subunit protein bL20 (115 aa).

This sequence belongs to the bacterial ribosomal protein bL20 family.

Binds directly to 23S ribosomal RNA and is necessary for the in vitro assembly process of the 50S ribosomal subunit. It is not involved in the protein synthesizing functions of that subunit. This chain is Large ribosomal subunit protein bL20, found in Prochlorococcus marinus (strain MIT 9303).